Consider the following 142-residue polypeptide: Hemoglobin subunit alpha (142 aa).

The region spanning 2 to 142 (VLSPADKTNI…VSTVLTSKYR (141 aa)) is the Globin domain. A Phosphoserine modification is found at Ser-4. Lys-8 bears the N6-succinyllysine mark. Phosphothreonine is present on Thr-9. At Lys-12 the chain carries N6-succinyllysine. Lys-17 is subject to N6-acetyllysine; alternate. Lys-17 bears the N6-succinyllysine; alternate mark. Position 25 is a phosphotyrosine (Tyr-25). A Phosphoserine modification is found at Ser-36. Lys-41 is modified (N6-succinyllysine). The residue at position 50 (Ser-50) is a Phosphoserine. O2 is bound at residue His-59. His-88 provides a ligand contact to heme b. The residue at position 103 (Ser-103) is a Phosphoserine. Thr-109 carries the phosphothreonine modification. Phosphoserine is present on Ser-125. Phosphothreonine occurs at positions 135 and 138. Residue Ser-139 is modified to Phosphoserine.

This sequence belongs to the globin family. In terms of assembly, heterotetramer of two alpha chains and two beta chains. As to expression, red blood cells.

Functionally, involved in oxygen transport from the lung to the various peripheral tissues. Its function is as follows. Hemopressin acts as an antagonist peptide of the cannabinoid receptor CNR1. Hemopressin-binding efficiently blocks cannabinoid receptor CNR1 and subsequent signaling. The polypeptide is Hemoglobin subunit alpha (HBA) (Canis latrans (Coyote)).